We begin with the raw amino-acid sequence, 536 residues long: T-complex protein 1 subunit delta (536 aa).

The disordered stretch occupies residues 1–21 (MAAVAAPMASKPRGSKAESFV).

This sequence belongs to the TCP-1 chaperonin family. Heterooligomeric complex of about 850 to 900 kDa that forms two stacked rings, 12 to 16 nm in diameter.

Its subcellular location is the cytoplasm. In terms of biological role, molecular chaperone; assists the folding of proteins upon ATP hydrolysis. Known to play a role, in vitro, in the folding of actin and tubulin. The chain is T-complex protein 1 subunit delta from Arabidopsis thaliana (Mouse-ear cress).